The chain runs to 322 residues: Protein-L-isoaspartate O-methyltransferase (322 aa).

Positions 1–101 (MSGERAKRFP…AKQGDRSAAP (101 aa)) are disordered. The span at 14 to 29 (EDLKREPRKPEGRVAE) shows a compositional bias: basic and acidic residues. 2 stretches are compositionally biased toward low complexity: residues 33-51 (AGDAARQRLTAAAAVPAAA) and 76-91 (HAPAAPGAAKRAPQGG). The active site involves Ser170.

It belongs to the methyltransferase superfamily. L-isoaspartyl/D-aspartyl protein methyltransferase family.

It is found in the cytoplasm. It carries out the reaction [protein]-L-isoaspartate + S-adenosyl-L-methionine = [protein]-L-isoaspartate alpha-methyl ester + S-adenosyl-L-homocysteine. Catalyzes the methyl esterification of L-isoaspartyl residues in peptides and proteins that result from spontaneous decomposition of normal L-aspartyl and L-asparaginyl residues. It plays a role in the repair and/or degradation of damaged proteins. This Burkholderia pseudomallei (strain 1106a) protein is Protein-L-isoaspartate O-methyltransferase.